The chain runs to 831 residues: AMP deaminase (831 aa).

Disordered stretches follow at residues 26-45 (NPGANRDEEVAAAPSSQDTP), 66-110 (NGTQ…KLLN), and 130-149 (NAVVSSVGGPETDPGNMETT). Phosphoserine is present on residues S79 and S84. Zn(2+)-binding residues include H319 and H321. Substrate contacts are provided by residues H321 and 390–395 (KFNLKY). Zn(2+) is bound at residue H587. E590 contacts substrate. The Proton acceptor role is filled by H609. Position 664 (D664) interacts with Zn(2+). Residue 665 to 668 (DPLQ) participates in substrate binding. A phosphoserine mark is found at S758, S776, S780, and S782.

Belongs to the metallo-dependent hydrolases superfamily. Adenosine and AMP deaminases family. In terms of assembly, homotetramer. Zn(2+) serves as cofactor.

The protein resides in the cytoplasm. It carries out the reaction AMP + H2O + H(+) = IMP + NH4(+). The protein operates within purine metabolism; IMP biosynthesis via salvage pathway; IMP from AMP: step 1/1. Its function is as follows. AMP deaminase plays a critical role in energy metabolism. This chain is AMP deaminase (ada1), found in Schizosaccharomyces pombe (strain 972 / ATCC 24843) (Fission yeast).